The primary structure comprises 427 residues: 3-phosphoshikimate 1-carboxyvinyltransferase (427 aa).

Residues K22, S23, and R27 each coordinate 3-phosphoshikimate. K22 contributes to the phosphoenolpyruvate binding site. Positions 96 and 124 each coordinate phosphoenolpyruvate. Residues S169, S170, Q171, S197, D313, N336, and K340 each coordinate 3-phosphoshikimate. Q171 contacts phosphoenolpyruvate. D313 serves as the catalytic Proton acceptor. Phosphoenolpyruvate is bound by residues R344, R386, and K411.

This sequence belongs to the EPSP synthase family. In terms of assembly, monomer.

It is found in the cytoplasm. The enzyme catalyses 3-phosphoshikimate + phosphoenolpyruvate = 5-O-(1-carboxyvinyl)-3-phosphoshikimate + phosphate. It functions in the pathway metabolic intermediate biosynthesis; chorismate biosynthesis; chorismate from D-erythrose 4-phosphate and phosphoenolpyruvate: step 6/7. Functionally, catalyzes the transfer of the enolpyruvyl moiety of phosphoenolpyruvate (PEP) to the 5-hydroxyl of shikimate-3-phosphate (S3P) to produce enolpyruvyl shikimate-3-phosphate and inorganic phosphate. The protein is 3-phosphoshikimate 1-carboxyvinyltransferase of Escherichia coli O9:H4 (strain HS).